The sequence spans 331 residues: MTKVYYEDAVKNNALEGKTVAVIGYGSQGHAHSQNLRDNGNNVIIGIREGKSAESARNDGFDVYSVSEAADKADVIMILLPDETQGETYENEIKPNLKAGNSLVFAHGFNIHFDVINPPSDVDVFLVAPKGPGHLVRRTFVEGGAVPSLFAIYQDATGNARDTALSYAKGIGATRAGVIETTFKEETETDLFGEQAVLCGGATHLIQAGFETLVEAGYQPELAYFEVLHEMKLIVDLMYEGGMEKMRHSISNTAEYGDYVSGPRVVTADTKKAMKEVLTDIQNGNFAKSFINDNKNGFKEFHRMRKEQQGHQIEKVGAELREMMPFVKPQH.

In terms of domain architecture, KARI N-terminal Rossmann spans 2–181 (TKVYYEDAVK…GATRAGVIET (180 aa)). Residues 25-28 (YGSQ), R48, S52, and 82-85 (DETQ) contribute to the NADP(+) site. H107 is a catalytic residue. G133 contributes to the NADP(+) binding site. The KARI C-terminal knotted domain maps to 182–327 (TFKEETETDL…AELREMMPFV (146 aa)). D190, E194, E226, and E230 together coordinate Mg(2+). S251 contributes to the substrate binding site.

This sequence belongs to the ketol-acid reductoisomerase family. The cofactor is Mg(2+).

It catalyses the reaction (2R)-2,3-dihydroxy-3-methylbutanoate + NADP(+) = (2S)-2-acetolactate + NADPH + H(+). It carries out the reaction (2R,3R)-2,3-dihydroxy-3-methylpentanoate + NADP(+) = (S)-2-ethyl-2-hydroxy-3-oxobutanoate + NADPH + H(+). The protein operates within amino-acid biosynthesis; L-isoleucine biosynthesis; L-isoleucine from 2-oxobutanoate: step 2/4. Its pathway is amino-acid biosynthesis; L-valine biosynthesis; L-valine from pyruvate: step 2/4. In terms of biological role, involved in the biosynthesis of branched-chain amino acids (BCAA). Catalyzes an alkyl-migration followed by a ketol-acid reduction of (S)-2-acetolactate (S2AL) to yield (R)-2,3-dihydroxy-isovalerate. In the isomerase reaction, S2AL is rearranged via a Mg-dependent methyl migration to produce 3-hydroxy-3-methyl-2-ketobutyrate (HMKB). In the reductase reaction, this 2-ketoacid undergoes a metal-dependent reduction by NADPH to yield (R)-2,3-dihydroxy-isovalerate. This chain is Ketol-acid reductoisomerase (NADP(+)), found in Listeria monocytogenes serovar 1/2a (strain ATCC BAA-679 / EGD-e).